The following is a 440-amino-acid chain: Ultraviolet-B receptor UVR8 (440 aa).

Position 2 is an N-acetylalanine (alanine 2). RCC1 repeat units follow at residues 2–31 (AEDM…VALL), 32–84 (SGDI…AYSQ), 86–137 (GMEV…AVTM), 139–189 (GEVQ…AVTE), 190–241 (DGDL…SVSY), 243–293 (GALY…ALTS), 294–345 (DGKL…AVTE), and 347–399 (NNVF…SGKS). The required for interaction with COP1 stretch occupies residues 397-423 (GKSWVSPAERYAVVPDETGLTDGSSKG). The disordered stretch occupies residues 413–440 (ETGLTDGSSKGNGGDISVPQTDVKRVRI).

In terms of assembly, homodimer in the absence of UV-B, but absorption of UV-B induces monomerization of UVR8 and interaction with COP1. Interacts with RUP1, RUP2 and histone H2B.

It localises to the nucleus. Its subcellular location is the cytoplasm. It is found in the cytosol. Functionally, UV-B specific signaling component that acts as a UV-B photoreceptor and plays a key role in establishing UV-protective responses in plants. Upon UV-B irradiation, UVR8 undergoes an immediate switch from homodimer to monomer, accumulates in the nucleus, interacts with the photomorphogenic repressor COP1 and regulates the expression of the transcription factor HY5 by associating with chromatin (through histone H2B binding) in the HY5 promoter region. UVR8 is involved in controlling aspects of leaf growth and morphogenesis in response to UV-B, is required for normal progression of endocycle and has a regulatory role in stomatal differentiation. Is required for plant circadian clock response to photomorphogenic UV-B light, partly through the transcriptional activation of responsive clock genes. Promotes photosynthetic efficiency at elevated levels of UV-B. Plays a role in mediating the effects of UV-B radiation on pathogen resistance by controlling the expression of the sinapate biosynthetic pathway. The two tryptophans, Trp-285 and Trp-233, serve collectively as the UV-B chromophore. The protein is Ultraviolet-B receptor UVR8 of Arabidopsis thaliana (Mouse-ear cress).